The sequence spans 548 residues: Polynucleotide 5'-hydroxyl-kinase nol-9 (548 aa).

186 to 193 contacts ATP; it reads GHKGAGKS.

Belongs to the Clp1 family. NOL9/GRC3 subfamily.

The protein resides in the nucleus. It localises to the nucleolus. In terms of biological role, polynucleotide 5'-kinase involved in rRNA processing. This Caenorhabditis briggsae protein is Polynucleotide 5'-hydroxyl-kinase nol-9 (nol-9).